The chain runs to 1520 residues: DNA-directed RNA polymerase subunit beta'' (1520 aa).

C220, C296, C303, and C306 together coordinate Zn(2+). 2 stretches are compositionally biased toward basic and acidic residues: residues 645 to 654 and 664 to 674; these read TREEEYRTRE and PENKYRTREGE. Disordered stretches follow at residues 645 to 676 and 705 to 786; these read TREE…GEGE and YRTL…KKEG. Composition is skewed to acidic residues over residues 730-748 and 756-779; these read GEYE…SSED and TLEE…PEED.

The protein belongs to the RNA polymerase beta' chain family. RpoC2 subfamily. In terms of assembly, in plastids the minimal PEP RNA polymerase catalytic core is composed of four subunits: alpha, beta, beta', and beta''. When a (nuclear-encoded) sigma factor is associated with the core the holoenzyme is formed, which can initiate transcription. Zn(2+) is required as a cofactor.

It localises to the plastid. The protein localises to the chloroplast. It carries out the reaction RNA(n) + a ribonucleoside 5'-triphosphate = RNA(n+1) + diphosphate. In terms of biological role, DNA-dependent RNA polymerase catalyzes the transcription of DNA into RNA using the four ribonucleoside triphosphates as substrates. The chain is DNA-directed RNA polymerase subunit beta'' from Sorghum bicolor (Sorghum).